We begin with the raw amino-acid sequence, 103 residues long: Cell division protein FtsB (103 aa).

The Cytoplasmic segment spans residues 1 to 3 (MGK). The chain crosses the membrane as a helical span at residues 4–21 (LTLLLLAILVWLQYSLWF). The Periplasmic segment spans residues 22–103 (GKNGIHDYTR…RAQSAGQNNR (82 aa)). Positions 31–71 (RVNDDVAAQQATNAKLKARNDQLFAEIDDLNGGQEALEERA) form a coiled coil.

This sequence belongs to the FtsB family. Part of a complex composed of FtsB, FtsL and FtsQ.

The protein localises to the cell inner membrane. Its function is as follows. Essential cell division protein. May link together the upstream cell division proteins, which are predominantly cytoplasmic, with the downstream cell division proteins, which are predominantly periplasmic. This Shigella boydii serotype 18 (strain CDC 3083-94 / BS512) protein is Cell division protein FtsB.